A 418-amino-acid chain; its full sequence is Glutamyl-tRNA(Gln) amidotransferase subunit D (418 aa).

The 332-residue stretch at 74–405 (KNISILSTGG…EEAKELMPKN (332 aa)) folds into the Asparaginase/glutaminase domain. Active-site residues include T84, T160, D161, and K237.

The protein belongs to the asparaginase 1 family. GatD subfamily. In terms of assembly, heterodimer of GatD and GatE.

The catalysed reaction is L-glutamyl-tRNA(Gln) + L-glutamine + ATP + H2O = L-glutaminyl-tRNA(Gln) + L-glutamate + ADP + phosphate + H(+). Its function is as follows. Allows the formation of correctly charged Gln-tRNA(Gln) through the transamidation of misacylated Glu-tRNA(Gln) in organisms which lack glutaminyl-tRNA synthetase. The reaction takes place in the presence of glutamine and ATP through an activated gamma-phospho-Glu-tRNA(Gln). The GatDE system is specific for glutamate and does not act on aspartate. This chain is Glutamyl-tRNA(Gln) amidotransferase subunit D, found in Methanococcus maripaludis (strain C6 / ATCC BAA-1332).